Consider the following 255-residue polypeptide: Thrombin-like enzyme batroxobin (255 aa).

An N-terminal signal peptide occupies residues 1 to 18 (MVLIRVIANLLILQVSYA). The propeptide occupies 19–24 (QKSSEL). Residues 25–247 (VIGGDECDIN…YLPWIQSIIA (223 aa)) enclose the Peptidase S1 domain. 6 disulfides stabilise this stretch: cysteine 31/cysteine 163, cysteine 50/cysteine 66, cysteine 98/cysteine 254, cysteine 142/cysteine 208, cysteine 174/cysteine 187, and cysteine 198/cysteine 223. Catalysis depends on charge relay system residues histidine 65 and aspartate 110. N-linked (GlcNAc...) asparagine glycosylation is present at asparagine 170. Serine 202 (charge relay system) is an active-site residue. Asparagine 249 carries an N-linked (GlcNAc...) asparagine glycan.

It belongs to the peptidase S1 family. Snake venom subfamily. In terms of assembly, monomer. Expressed by the venom gland.

It localises to the secreted. The catalysed reaction is Selective cleavage of Arg-|-Xaa bond in fibrinogen, to form fibrin, and release fibrinopeptide A. The specificity of further degradation of fibrinogen varies with species origin of the enzyme.. Functionally, thrombin-like snake venom serine protease. Cleaves Arg-Gly bonds in fibrinogen alpha chains (FGA). In Bothrops atrox (Barba amarilla), this protein is Thrombin-like enzyme batroxobin.